Consider the following 158-residue polypeptide: NAD(P)H-quinone oxidoreductase subunit N (158 aa).

The protein belongs to the complex I NdhN subunit family. As to quaternary structure, NDH-1 can be composed of about 15 different subunits; different subcomplexes with different compositions have been identified which probably have different functions.

The protein localises to the cellular thylakoid membrane. The catalysed reaction is a plastoquinone + NADH + (n+1) H(+)(in) = a plastoquinol + NAD(+) + n H(+)(out). It carries out the reaction a plastoquinone + NADPH + (n+1) H(+)(in) = a plastoquinol + NADP(+) + n H(+)(out). Its function is as follows. NDH-1 shuttles electrons from an unknown electron donor, via FMN and iron-sulfur (Fe-S) centers, to quinones in the respiratory and/or the photosynthetic chain. The immediate electron acceptor for the enzyme in this species is believed to be plastoquinone. Couples the redox reaction to proton translocation, and thus conserves the redox energy in a proton gradient. Cyanobacterial NDH-1 also plays a role in inorganic carbon-concentration. In Crocosphaera subtropica (strain ATCC 51142 / BH68) (Cyanothece sp. (strain ATCC 51142)), this protein is NAD(P)H-quinone oxidoreductase subunit N.